Reading from the N-terminus, the 426-residue chain is Histidine--tRNA ligase (426 aa).

Belongs to the class-II aminoacyl-tRNA synthetase family. In terms of assembly, homodimer.

Its subcellular location is the cytoplasm. The enzyme catalyses tRNA(His) + L-histidine + ATP = L-histidyl-tRNA(His) + AMP + diphosphate + H(+). This chain is Histidine--tRNA ligase, found in Colwellia psychrerythraea (strain 34H / ATCC BAA-681) (Vibrio psychroerythus).